A 301-amino-acid polypeptide reads, in one-letter code: PSVSFQLPVIDFSDQNLKPGSSKWDEVTADVLKALEDYGCFEASFDKLSVELNRSVFEAMEDLFELPIPTKQRNVSSKLFHGYLCHNLYESLGINDANVLEKVNDFTQQLWPDHGNKSISETIHLFSEQLVELDLMVRRMIMESFGIEKYIDEHLNSTYYLTRLMKYTSPPDDDDDEETKLGLRSHTDKNIITILHQYQVDGLEVKTKDDKWIKVKPSQDSVLVMVGDSLCALLNGRLHSPYHRVIMTGKKTRYSTGLFSIPKTGVIIDSPEELVDKEHPRIFKPFEYTDFLHFFQTEAGR.

Residues 158–262 (TYYLTRLMKY…RYSTGLFSIP (105 aa)) form the Fe2OG dioxygenase domain. Fe cation contacts are provided by His186, Asp188, and His243. Residue Arg253 coordinates 2-oxoglutarate.

This sequence belongs to the iron/ascorbate-dependent oxidoreductase family. It depends on Fe(2+) as a cofactor.

Functionally, probable 2-oxoglutarate-dependent dioxygenase that may be involved in glucosinolates biosynthesis. May play a role in the production of aliphatic glucosinolates. The chain is Probable 2-oxoglutarate-dependent dioxygenase AOP1 (AOP1) from Arabidopsis thaliana (Mouse-ear cress).